Reading from the N-terminus, the 276-residue chain is Methylesterase 17 (276 aa).

One can recognise an AB hydrolase-1 domain in the interval 19–138; sequence PHFVLIHGMS…TDEDMKDGVP (120 aa). Ser95 serves as the catalytic Acyl-ester intermediate. Residues Asp225 and His252 each act as charge relay system in the active site.

The protein belongs to the AB hydrolase superfamily. Methylesterase family. Expressed in several tissues of seedlings and adult plants, with a higher relative level of expression in the seedling shoot apex and the adult stem.

It catalyses the reaction methyl (indol-3-yl)acetate + H2O = (indol-3-yl)acetate + methanol + H(+). It functions in the pathway plant hormone biosynthesis. Functionally, methylesterase that efficiently and specifically hydrolyzes methyl indole-3-acetic acid (MeIAA) to IAA (auxin). MeIAA is believed to be an inactive form of auxin that needs to be demethylated to exert a biological effect. In Arabidopsis thaliana (Mouse-ear cress), this protein is Methylesterase 17.